A 173-amino-acid chain; its full sequence is Regulatory protein RecX (173 aa).

Belongs to the RecX family.

The protein localises to the cytoplasm. Modulates RecA activity. In Mycobacterium marinum (strain ATCC BAA-535 / M), this protein is Regulatory protein RecX.